Consider the following 763-residue polypeptide: Pentatricopeptide repeat-containing protein At4g32430, mitochondrial (763 aa).

Residues Met-1–Asn-38 constitute a mitochondrion transit peptide. PPR repeat units follow at residues Asp-77–Ser-109, Phe-110–Pro-140, Asp-141–Phe-172, Asp-173–Ser-207, Asp-208–Lys-238, Asp-239–Leu-274, Asp-275–Ser-309, Leu-310–Ser-344, Ser-350–Pro-370, Asn-371–Ser-405, Glu-406–Arg-436, Glu-437–Asn-471, Glu-472–Ser-507, Cys-508–Lys-538, Asn-539–Pro-573, Asp-574–Val-604, and Ser-610–Gly-640. Residues Met-645–Gly-720 are type E motif. The tract at residues Gly-724–Asn-756 is type E(+) motif.

The protein belongs to the PPR family. PCMP-E subfamily.

It localises to the mitochondrion. The protein is Pentatricopeptide repeat-containing protein At4g32430, mitochondrial (PCMP-E40) of Arabidopsis thaliana (Mouse-ear cress).